Reading from the N-terminus, the 314-residue chain is tRNA dimethylallyltransferase (314 aa).

11-18 serves as a coordination point for ATP; that stretch reads GPTAVGKT. 13–18 serves as a coordination point for substrate; sequence TAVGKT. Residues 36 to 39 form an interaction with substrate tRNA region; it reads DSMQ.

The protein belongs to the IPP transferase family. As to quaternary structure, monomer. It depends on Mg(2+) as a cofactor.

The enzyme catalyses adenosine(37) in tRNA + dimethylallyl diphosphate = N(6)-dimethylallyladenosine(37) in tRNA + diphosphate. Catalyzes the transfer of a dimethylallyl group onto the adenine at position 37 in tRNAs that read codons beginning with uridine, leading to the formation of N6-(dimethylallyl)adenosine (i(6)A). The protein is tRNA dimethylallyltransferase of Bacillus anthracis.